A 252-amino-acid polypeptide reads, in one-letter code: Probable transcriptional regulatory protein Ava_1228 (252 aa).

The protein belongs to the TACO1 family.

It localises to the cytoplasm. This Trichormus variabilis (strain ATCC 29413 / PCC 7937) (Anabaena variabilis) protein is Probable transcriptional regulatory protein Ava_1228.